We begin with the raw amino-acid sequence, 570 residues long: Peptidyl-prolyl cis-trans isomerase FKBP9 (570 aa).

An N-terminal signal peptide occupies residues 1–24 (MAFGARGWRRWSLLLLLLWVTGQA). PPIase FKBP-type domains are found at residues 54-142 (GDFV…VDIW), 166-254 (SDFV…LDLH), 278-365 (GDFL…IDFH), and 389-477 (GDYL…LELV). N-linked (GlcNAc...) asparagine glycosylation is found at asparagine 174, asparagine 286, asparagine 302, and asparagine 397. EF-hand domains lie at 488–523 (WNGE…QVAS) and 533–568 (NAEM…TKHD). 10 residues coordinate Ca(2+): aspartate 501, aspartate 503, asparagine 505, glutamate 507, glutamate 512, aspartate 546, asparagine 548, aspartate 550, lysine 552, and glutamate 557. The Prevents secretion from ER signature appears at 567-570 (HDEL).

Phosphorylated.

The protein resides in the endoplasmic reticulum lumen. The enzyme catalyses [protein]-peptidylproline (omega=180) = [protein]-peptidylproline (omega=0). Inhibited by FK506. PPIases accelerate the folding of proteins during protein synthesis. This chain is Peptidyl-prolyl cis-trans isomerase FKBP9 (Fkbp9), found in Rattus norvegicus (Rat).